A 192-amino-acid chain; its full sequence is EF-hand protein 5 (192 aa).

The disordered stretch occupies residues 1–36 (MKDKAPVSSQQDHFSRGGAVGGKPISDVRGTSRPFY). 4 consecutive EF-hand domains span residues 46-80 (AELAEGFRVLSNGQKTISIPMKEVSALMASVGLHL), 81-118 (SDEEFHEVMRVFGQGEQTNTEELSFKDFLSLMMCEVDD), 119-154 (TMLEEMRGAFLHYDKQKTGFVTKKQFTELFATGGEC), and 155-190 (STPEEVEELLTIAEQDETDDKIDYNRFINELIHRLN). 5 residues coordinate Ca(2+): threonine 100, glutamate 102, aspartate 107, aspartate 132, and threonine 136.

The polypeptide is EF-hand protein 5 (Trypanosoma brucei brucei).